A 159-amino-acid chain; its full sequence is ATP-dependent Clp protease adapter protein CLPS1, chloroplastic (159 aa).

The N-terminal 44 residues, 1–44 (METAICGRLALAPSSLFNSKSGDKHLVSKGPCVNRSILMTLSTS), are a transit peptide targeting the chloroplast.

Belongs to the ClpS family. In terms of assembly, interacts with CLPC1 (via N-terminus) and CLPC2, but not with CLPt1 or CLPT2. Binds to ClpF; this interaction stimulates their association with ClpC. Expressed exclusively in photosynthetic green tissues with high levels in young, developing leaf tissues.

It localises to the plastid. Its subcellular location is the chloroplast stroma. Small adapter protein that modulate the activity of CLPC. Involved in plastid biogenesis in particular when chloroplast protein synthesis capacity is a limiting factor. Probably involved in substrate selection for plastid Clp protease system. Recruitment to ClpC chaperones is facilitated by CLPF thus forming a binary adapter for selective substrate recognition and delivery to plastid Clp protease system (CLPC). In Arabidopsis thaliana (Mouse-ear cress), this protein is ATP-dependent Clp protease adapter protein CLPS1, chloroplastic.